We begin with the raw amino-acid sequence, 551 residues long: Calcium-dependent protein kinase 3 (551 aa).

The disordered stretch occupies residues 1–57; it reads MGNCCRSPAAAAREDVKSSHFPASAGKKKPHQARNGGVGGGGGGGGGGGGGGGAGQK. Residue Gly2 is the site of N-myristoyl glycine attachment. A compositionally biased stretch (gly residues) spans 36–55; it reads GGVGGGGGGGGGGGGGGGAG. A Protein kinase domain is found at 77–335; it reads YALDRELGRG…AKQVLEHPWL (259 aa). ATP-binding positions include 83 to 91 and Lys106; that span reads LGRGEFGVT. The active-site Proton acceptor is the Asp201. The tract at residues 341–371 is autoinhibitory domain; the sequence is APNVPLGDIVKSRLKQFSRMNRFKRRALRVI. 4 consecutive EF-hand domains span residues 378-413, 414-449, 450-485, and 486-521; these read EEVE…FGSH, LAES…LQRM, ANDE…DGAG, and DSME…GTDW. Asp391, Asp393, Asp395, Glu402, Asp427, Asn429, Glu438, Asp463, Asp465, Asn467, Tyr469, Glu474, Asp499, Asp501, Asp503, Lys505, and Glu510 together coordinate Ca(2+).

Belongs to the protein kinase superfamily. Ser/Thr protein kinase family. CDPK subfamily. Expressed in roots and developing seeds.

It is found in the membrane. The enzyme catalyses L-seryl-[protein] + ATP = O-phospho-L-seryl-[protein] + ADP + H(+). It catalyses the reaction L-threonyl-[protein] + ATP = O-phospho-L-threonyl-[protein] + ADP + H(+). Activated by calcium. Autophosphorylation may play an important role in the regulation of the kinase activity. May play a role in signal transduction pathways that involve calcium as a second messenger. The protein is Calcium-dependent protein kinase 3 of Oryza sativa subsp. japonica (Rice).